The following is a 331-amino-acid chain: Tetraacyldisaccharide 4'-kinase (331 aa).

58–65 (TVGGSGKT) contacts ATP.

It belongs to the LpxK family.

It carries out the reaction a lipid A disaccharide + ATP = a lipid IVA + ADP + H(+). Its pathway is glycolipid biosynthesis; lipid IV(A) biosynthesis; lipid IV(A) from (3R)-3-hydroxytetradecanoyl-[acyl-carrier-protein] and UDP-N-acetyl-alpha-D-glucosamine: step 6/6. In terms of biological role, transfers the gamma-phosphate of ATP to the 4'-position of a tetraacyldisaccharide 1-phosphate intermediate (termed DS-1-P) to form tetraacyldisaccharide 1,4'-bis-phosphate (lipid IVA). This Shewanella denitrificans (strain OS217 / ATCC BAA-1090 / DSM 15013) protein is Tetraacyldisaccharide 4'-kinase.